The primary structure comprises 1166 residues: Myosin-1 (1166 aa).

A compositionally biased stretch (polar residues) spans 1–13; it reads MSQKVTPFMQSLK. Residues 1-71 form a disordered region; sequence MSQKVTPFMQ…AGDSEDSPYS (71 aa). Position 14 is a phosphoserine (Ser14). Positions 32–45 are enriched in polar residues; that stretch reads NSSGASVRLTNSNV. The region spanning 112 to 161 is the Myosin N-terminal SH3-like domain; that stretch reads KKILQSWIQLPNGNWELGKILSTSGEESVISLPEGKVIKVISETLVPANP. In terms of domain architecture, Myosin motor spans 165-837; that stretch reads DGVDDLMQLS…QIGVLEDTRN (673 aa). ATP is bound by residues 256–263 and 304–312; these read GESGAGKT and NDNSSRFGK. Actin-binding regions lie at residues 589-623 and 717-739; these read LFEK…KQHL and LFQL…KPNN. IQ domains lie at 839-868, 862-891, 888-917, and 911-940; these read TLHG…GISI, LKRG…RHKA, RHKA…ASVV, and IADA…LKSG. Residues 955–1005 are a coiled coil; it reads SVLSELQRRVLKAEAALREKEEENDILQQRLQQYENRWSEYETKMKSMEEI. The tract at residues 1030–1065 is disordered; it reads ARNSDASVNASDATDWDSSSNQFRSQTSNGVGSRLQ. Positions 1032–1060 are enriched in polar residues; that stretch reads NSDASVNASDATDWDSSSNQFRSQTSNGV.

This sequence belongs to the TRAFAC class myosin-kinesin ATPase superfamily. Myosin family. Plant myosin class VIII subfamily. In terms of assembly, homodimer.

The protein resides in the cell junction. Its subcellular location is the plasmodesma. It localises to the cytoplasm. The protein localises to the cytoskeleton. It is found in the phragmoplast. The protein resides in the endosome. Its subcellular location is the endoplasmic reticulum. Functionally, myosin heavy chain that is required for the cell cycle-regulated transport of various organelles and proteins for their segregation. Functions by binding with its tail domain to receptor proteins on organelles and exerting force with its N-terminal motor domain against actin filaments, thereby transporting its cargo along polarized actin cables. Involved in endocytosis via its action in endosomal trafficking. The chain is Myosin-1 (VIII-1) from Arabidopsis thaliana (Mouse-ear cress).